Consider the following 63-residue polypeptide: Large ribosomal subunit protein bL28 (63 aa).

It belongs to the bacterial ribosomal protein bL28 family.

The polypeptide is Large ribosomal subunit protein bL28 (Desulfosudis oleivorans (strain DSM 6200 / JCM 39069 / Hxd3) (Desulfococcus oleovorans)).